Reading from the N-terminus, the 324-residue chain is THUMP domain-containing protein 1 homolog (324 aa).

2 disordered regions span residues 1 to 24 (MEPA…KKYF) and 67 to 104 (SEKP…DDDD). Basic and acidic residues predominate over residues 68–80 (EKPENEPEKKQPE). T99 bears the Phosphothreonine mark. Phosphoserine is present on S100. A THUMP domain is found at 154–260 (DIATTGKSMS…RGWCLLSVID (107 aa)). The tract at residues 275 to 324 (NPSDKKSSGEGDSKSETSEVANGNDKEQAESSEESKSNDDENKDSTENDK) is disordered. 2 stretches are compositionally biased toward basic and acidic residues: residues 277–291 (SDKK…KSET) and 298–324 (NDKE…ENDK).

This sequence belongs to the THUMPD1 family.

The protein is THUMP domain-containing protein 1 homolog of Drosophila melanogaster (Fruit fly).